Here is a 344-residue protein sequence, read N- to C-terminus: uncharacterized protein (344 aa).

An N-terminal signal peptide occupies residues 1-27 (MKKWLIIAVSLAIAIVLFMYTKGEAKA). Positions 29–344 (GMTVGYTTGD…FWKAIRKGTK (316 aa)) constitute a GH18 domain. The active-site Proton donor is the glutamate 140.

The protein belongs to the glycosyl hydrolase 18 family.

This is an uncharacterized protein from Bacillus subtilis (strain 168).